Here is a 320-residue protein sequence, read N- to C-terminus: Prophage side tail fiber protein homolog StfQ (320 aa).

Disordered regions lie at residues 147–213 (SGRA…HKSS) and 241–270 (TTSG…TAAS). Polar residues-rich tracts occupy residues 172-206 (DLGT…NSAG) and 241-258 (TTSG…SSDG). The span at 261–270 (THSLSGTAAS) shows a compositional bias: low complexity.

The protein belongs to the tail fiber family.

This chain is Prophage side tail fiber protein homolog StfQ (stfQ), found in Escherichia coli (strain K12).